Here is a 211-residue protein sequence, read N- to C-terminus: MNESDAKHWLSDRVSRETMDRLELYHTLLTRWQKTINLIAPSTIDSVWVRHIMDSAQLFDLASKPAHRWLDLGSGGGFPGLVVAAMAKDVCPNLTVTLVESDIRKCGFLREAARQMDLSVKILSRRIGDVPAQTADVISARALSSLSNLIGHARPHMTPKTCLLFPKGMSYVAELETLPDDWQVNAEVIESVTDSDAVILRFRGAHLEGEG.

3 residues coordinate S-adenosyl-L-methionine: G73, F78, and R141.

Belongs to the methyltransferase superfamily. RNA methyltransferase RsmG family.

The protein localises to the cytoplasm. The enzyme catalyses guanosine(527) in 16S rRNA + S-adenosyl-L-methionine = N(7)-methylguanosine(527) in 16S rRNA + S-adenosyl-L-homocysteine. In terms of biological role, specifically methylates the N7 position of guanine in position 527 of 16S rRNA. The protein is Ribosomal RNA small subunit methyltransferase G of Jannaschia sp. (strain CCS1).